We begin with the raw amino-acid sequence, 145 residues long: 3-dehydroquinate dehydratase (145 aa).

Tyr24 (proton acceptor) is an active-site residue. Substrate-binding residues include Asn75, His81, and Asp88. Residue His101 is the Proton donor of the active site. Substrate contacts are provided by residues Ile102 to Ser103 and Arg112.

This sequence belongs to the type-II 3-dehydroquinase family. As to quaternary structure, homododecamer.

It carries out the reaction 3-dehydroquinate = 3-dehydroshikimate + H2O. Its pathway is metabolic intermediate biosynthesis; chorismate biosynthesis; chorismate from D-erythrose 4-phosphate and phosphoenolpyruvate: step 3/7. Its function is as follows. Catalyzes a trans-dehydration via an enolate intermediate. The polypeptide is 3-dehydroquinate dehydratase (Rhizobium johnstonii (strain DSM 114642 / LMG 32736 / 3841) (Rhizobium leguminosarum bv. viciae)).